We begin with the raw amino-acid sequence, 89 residues long: Small ribosomal subunit protein uS15 (89 aa).

Belongs to the universal ribosomal protein uS15 family. As to quaternary structure, part of the 30S ribosomal subunit. Forms a bridge to the 50S subunit in the 70S ribosome, contacting the 23S rRNA.

Functionally, one of the primary rRNA binding proteins, it binds directly to 16S rRNA where it helps nucleate assembly of the platform of the 30S subunit by binding and bridging several RNA helices of the 16S rRNA. In terms of biological role, forms an intersubunit bridge (bridge B4) with the 23S rRNA of the 50S subunit in the ribosome. In Cellvibrio japonicus (strain Ueda107) (Pseudomonas fluorescens subsp. cellulosa), this protein is Small ribosomal subunit protein uS15.